We begin with the raw amino-acid sequence, 337 residues long: Gastrula zinc finger protein XlCGF26.1 (337 aa).

12 consecutive C2H2-type zinc fingers follow at residues 6–28 (FDCTECGKSFTDLKTLQHHYKIH), 34–56 (FICAECGKGFNQKTTLLNHSKIH), 62–84 (FPCTECGKCFTERKTLLNHNKIH), 90–112 (FICAECGIGFTQKTTLLNHSKIH), 118–140 (FPCTECGKCFTERKTLLNHNKIH), 146–168 (FICAECGIGFTQKTTLLNHSKIH), 174–196 (FPCTECGKCFAEKKTLQNHNKIH), 202–224 (FTCTDCGKSFTQRTSLQNHVKIH), 230–252 (FTCTECGKSFSEKKTLREHNKIH), 258–280 (FTCTYCGKSFSQRISLQNHFKIH), 286–309 (FSCTECGKCFTIKSTLQSHLKRTH), and 315–337 (FTCTECGKSFTKKKILLKHNKIH).

The protein belongs to the krueppel C2H2-type zinc-finger protein family.

It is found in the nucleus. In terms of biological role, may be involved in transcriptional regulation. The polypeptide is Gastrula zinc finger protein XlCGF26.1 (Xenopus laevis (African clawed frog)).